Consider the following 399-residue polypeptide: Elongation factor Tu (399 aa).

The 200-residue stretch at 10–209 (KPHVNIGTIG…EVDAYIPTPK (200 aa)) folds into the tr-type G domain. Residues 19 to 26 (GHVDHGKT) are G1. A GTP-binding site is contributed by 19-26 (GHVDHGKT). T26 contacts Mg(2+). A G2 region spans residues 60–64 (GITIA). The tract at residues 81 to 84 (DCPG) is G3. Residues 81 to 85 (DCPGH) and 136 to 139 (NKQD) contribute to the GTP site. A G4 region spans residues 136–139 (NKQD). The tract at residues 174 to 176 (SAL) is G5.

This sequence belongs to the TRAFAC class translation factor GTPase superfamily. Classic translation factor GTPase family. EF-Tu/EF-1A subfamily. Monomer.

It localises to the cytoplasm. The catalysed reaction is GTP + H2O = GDP + phosphate + H(+). Functionally, GTP hydrolase that promotes the GTP-dependent binding of aminoacyl-tRNA to the A-site of ribosomes during protein biosynthesis. The polypeptide is Elongation factor Tu (Helicobacter pylori (strain P12)).